Consider the following 218-residue polypeptide: Telomere repeats-binding bouquet formation protein 2 (218 aa).

The disordered stretch occupies residues 117–143 (HDRMASSDKENIRPTPEHKQELSKSAE).

Belongs to the TERB2 family. Component of the MAJIN-TERB1-TERB2 complex, composed of MAJIN, TERB1 and TERB2. Specifically expressed in germline tissues.

The protein resides in the chromosome. The protein localises to the telomere. It is found in the nucleus inner membrane. Meiosis-specific telomere-associated protein involved in meiotic telomere attachment to the nucleus inner membrane, a crucial step for homologous pairing and synapsis. Component of the MAJIN-TERB1-TERB2 complex, which promotes telomere cap exchange by mediating attachment of telomeric DNA to the inner nuclear membrane and replacement of the protective cap of telomeric chromosomes: in early meiosis, the MAJIN-TERB1-TERB2 complex associates with telomeric DNA and the shelterin/telosome complex. During prophase, the complex matures and promotes release of the shelterin/telosome complex from telomeric DNA. In Mus musculus (Mouse), this protein is Telomere repeats-binding bouquet formation protein 2.